Here is a 465-residue protein sequence, read N- to C-terminus: 6-phospho-beta-glucosidase (465 aa).

The active-site Proton donor is Glu-173. Glu-362 acts as the Nucleophile in catalysis.

It belongs to the glycosyl hydrolase 1 family.

It carries out the reaction 6-phospho-beta-D-glucosyl-(1-&gt;4)-D-glucose + H2O = D-glucose 6-phosphate + D-glucose. It participates in carbohydrate metabolism; beta-glucoside metabolism. This is 6-phospho-beta-glucosidase (arbB) from Dickeya chrysanthemi (Pectobacterium chrysanthemi).